Reading from the N-terminus, the 209-residue chain is Thiamine-phosphate synthase (209 aa).

Residues 37–41 and N69 each bind 4-amino-2-methyl-5-(diphosphooxymethyl)pyrimidine; that span reads QYRDK. Mg(2+) contacts are provided by D70 and D89. S108 contacts 4-amino-2-methyl-5-(diphosphooxymethyl)pyrimidine. 2-[(2R,5Z)-2-carboxy-4-methylthiazol-5(2H)-ylidene]ethyl phosphate is bound at residue 135-137; the sequence is SPT. K138 serves as a coordination point for 4-amino-2-methyl-5-(diphosphooxymethyl)pyrimidine. 2-[(2R,5Z)-2-carboxy-4-methylthiazol-5(2H)-ylidene]ethyl phosphate contacts are provided by residues G165 and 185–186; that span reads VS.

Belongs to the thiamine-phosphate synthase family. Mg(2+) is required as a cofactor.

The catalysed reaction is 2-[(2R,5Z)-2-carboxy-4-methylthiazol-5(2H)-ylidene]ethyl phosphate + 4-amino-2-methyl-5-(diphosphooxymethyl)pyrimidine + 2 H(+) = thiamine phosphate + CO2 + diphosphate. It carries out the reaction 2-(2-carboxy-4-methylthiazol-5-yl)ethyl phosphate + 4-amino-2-methyl-5-(diphosphooxymethyl)pyrimidine + 2 H(+) = thiamine phosphate + CO2 + diphosphate. It catalyses the reaction 4-methyl-5-(2-phosphooxyethyl)-thiazole + 4-amino-2-methyl-5-(diphosphooxymethyl)pyrimidine + H(+) = thiamine phosphate + diphosphate. It participates in cofactor biosynthesis; thiamine diphosphate biosynthesis; thiamine phosphate from 4-amino-2-methyl-5-diphosphomethylpyrimidine and 4-methyl-5-(2-phosphoethyl)-thiazole: step 1/1. In terms of biological role, condenses 4-methyl-5-(beta-hydroxyethyl)thiazole monophosphate (THZ-P) and 2-methyl-4-amino-5-hydroxymethyl pyrimidine pyrophosphate (HMP-PP) to form thiamine monophosphate (TMP). The sequence is that of Thiamine-phosphate synthase from Halorhodospira halophila (strain DSM 244 / SL1) (Ectothiorhodospira halophila (strain DSM 244 / SL1)).